We begin with the raw amino-acid sequence, 411 residues long: Diaminobutyrate--2-oxoglutarate transaminase (411 aa).

At lysine 262 the chain carries N6-(pyridoxal phosphate)lysine.

It belongs to the class-III pyridoxal-phosphate-dependent aminotransferase family. Pyridoxal 5'-phosphate is required as a cofactor.

It carries out the reaction L-2,4-diaminobutanoate + 2-oxoglutarate = L-aspartate 4-semialdehyde + L-glutamate. It functions in the pathway amine and polyamine biosynthesis; ectoine biosynthesis; L-ectoine from L-aspartate 4-semialdehyde: step 1/3. Functionally, catalyzes reversively the conversion of L-aspartate beta-semialdehyde (ASA) to L-2,4-diaminobutyrate (DABA) by transamination with L-glutamate. The chain is Diaminobutyrate--2-oxoglutarate transaminase (ectB) from Vibrio cholerae serotype O1 (strain ATCC 39315 / El Tor Inaba N16961).